Here is a 233-residue protein sequence, read N- to C-terminus: H-2 class II histocompatibility antigen, A-F alpha chain (233 aa).

Residues 1–88 (EDDIEADHVG…KRSNFTPATN (88 aa)) are alpha-1. Residues 1 to 195 (EDDIEADHVG…IPAPMSELTE (195 aa)) lie on the Extracellular side of the membrane. Positions 89–182 (EAPQATVFPK…GLEEPVLKHW (94 aa)) are alpha-2. In terms of domain architecture, Ig-like C1-type spans 91–183 (PQATVFPKSP…LEEPVLKHWE (93 aa)). C111 and C167 are disulfide-bonded. N-linked (GlcNAc...) asparagine glycosylation occurs at N122. The interval 183–195 (EPEIPAPMSELTE) is connecting peptide. Residues 196–221 (TVVCALGLSVGLVGIVVGTIFIIQGL) traverse the membrane as a helical segment. Residues 222-233 (RSGGTSRHPGPL) are Cytoplasmic-facing.

It belongs to the MHC class II family.

The protein resides in the membrane. This chain is H-2 class II histocompatibility antigen, A-F alpha chain (H2-Aa), found in Mus musculus (Mouse).